Here is a 666-residue protein sequence, read N- to C-terminus: Long chain acyl-CoA synthetase 5 (666 aa).

228–239 (IMYTSGTTGDPK) contributes to the ATP binding site. The segment at 495–519 (DGWLHTGDVGEWQPNGSMKIIDRKK) is fatty acid-binding.

This sequence belongs to the ATP-dependent AMP-binding enzyme family. It depends on Mg(2+) as a cofactor.

It carries out the reaction a long-chain fatty acid + ATP + CoA = a long-chain fatty acyl-CoA + AMP + diphosphate. The protein operates within lipid metabolism; fatty acid metabolism. Its function is as follows. Activation of long-chain fatty acids for both synthesis of cellular lipids, and degradation via beta-oxidation. Preferentially uses palmitate, palmitoleate, oleate and linoleate. The protein is Long chain acyl-CoA synthetase 5 (LACS5) of Arabidopsis thaliana (Mouse-ear cress).